The sequence spans 504 residues: CaM kinase-like vesicle-associated protein (504 aa).

Positions 24 to 286 (YDLGQVVKTE…AEEAISHEWI (263 aa)) constitute a Protein kinase domain. The tract at residues 378-504 (KSDDMASADR…AQESQRVETS (127 aa)) is disordered. The residue at position 384 (Ser-384) is a Phosphoserine. The segment covering 390-431 (TPATDGSATPATDGSVTPATDGSITPATDGSVTPATDRSATP) has biased composition (polar residues). 2 positions are modified to phosphothreonine: Thr-438 and Thr-462. Residues 445 to 470 (TVPAAQSSAAPAAKAAATPEPAVAQP) are compositionally biased toward low complexity.

This sequence belongs to the protein kinase superfamily. CAMK Ser/Thr protein kinase family. In terms of assembly, interacts with calmodulin, in the presence of calcium. Ca(2+) is required as a cofactor. As to expression, expressed in brain and weakly in eye. Not detected in liver, kidney, spleen, thymus, bladder, aorta, lung, intestine, esophagus, stomach, skeletal muscle, heart, diaphragm, uterus, tail skin, submaxillary gland, prostate, ear, epididymis, placenta, pancreas, ovary, testis, adrenal gland, parathyroid gland, thyroid gland, pineal gland, pituitary and sciatic nerve. In adult hippocampus, predominantly expressed in caudate nucleus, cortex, hypothalamus, olfactory bulb, and midbrain and faintly in pons, brainstem and spinal cord.

Its subcellular location is the cell membrane. The protein resides in the cytoplasmic vesicle membrane. Functionally, has no detectable kinase activity in vitro. In Rattus norvegicus (Rat), this protein is CaM kinase-like vesicle-associated protein (Camkv).